The following is a 593-amino-acid chain: Chromosomal replication initiator protein DnaA (593 aa).

The domain I, interacts with DnaA modulators stretch occupies residues 1-71 (MSDPCWEQCV…EIISNSDAGP (71 aa)). The domain II stretch occupies residues 71 to 256 (PKSLEIAVAQ…DVEGGIQHKH (186 aa)). The disordered stretch occupies residues 97 to 186 (AVPVPDPLPS…STESSADRER (90 aa)). The span at 113–124 (SFQPPKGNTSAD) shows a compositional bias: polar residues. The segment at 257-473 (NLNTTFIFDN…GALKRVIANA (217 aa)) is domain III, AAA+ region. ATP-binding residues include Gly301, Gly303, Lys304, and Thr305. The tract at residues 474 to 593 (QFTQRSISVE…VKNLLRTLTT (120 aa)) is domain IV, binds dsDNA.

It belongs to the DnaA family. As to quaternary structure, oligomerizes as a right-handed, spiral filament on DNA at oriC.

The protein localises to the cytoplasm. Plays an essential role in the initiation and regulation of chromosomal replication. ATP-DnaA binds to the origin of replication (oriC) to initiate formation of the DNA replication initiation complex once per cell cycle. Binds the DnaA box (a 9 base pair repeat at the origin) and separates the double-stranded (ds)DNA. Forms a right-handed helical filament on oriC DNA; dsDNA binds to the exterior of the filament while single-stranded (ss)DNA is stabiized in the filament's interior. The ATP-DnaA-oriC complex binds and stabilizes one strand of the AT-rich DNA unwinding element (DUE), permitting loading of DNA polymerase. After initiation quickly degrades to an ADP-DnaA complex that is not apt for DNA replication. Binds acidic phospholipids. This Teredinibacter turnerae (strain ATCC 39867 / T7901) protein is Chromosomal replication initiator protein DnaA.